The primary structure comprises 95 residues: MAKLTKEEVKHVANLARLAITEEEAEKFAEQLGKITDFAEQLNELDTANVEPTTHVLPLVNVMREDVAVKGLDREVMMLNVREQEDGQVKVPAIM.

This sequence belongs to the GatC family. In terms of assembly, heterotrimer of A, B and C subunits.

The enzyme catalyses L-glutamyl-tRNA(Gln) + L-glutamine + ATP + H2O = L-glutaminyl-tRNA(Gln) + L-glutamate + ADP + phosphate + H(+). The catalysed reaction is L-aspartyl-tRNA(Asn) + L-glutamine + ATP + H2O = L-asparaginyl-tRNA(Asn) + L-glutamate + ADP + phosphate + 2 H(+). Allows the formation of correctly charged Asn-tRNA(Asn) or Gln-tRNA(Gln) through the transamidation of misacylated Asp-tRNA(Asn) or Glu-tRNA(Gln) in organisms which lack either or both of asparaginyl-tRNA or glutaminyl-tRNA synthetases. The reaction takes place in the presence of glutamine and ATP through an activated phospho-Asp-tRNA(Asn) or phospho-Glu-tRNA(Gln). The polypeptide is Aspartyl/glutamyl-tRNA(Asn/Gln) amidotransferase subunit C (Lysinibacillus sphaericus (strain C3-41)).